The sequence spans 162 residues: UPF0102 protein Bpet0439 (162 aa).

The interval 15 to 52 (QAQQRQMKRRRAAAHRAARGPAPARAPRASPTQRTGTA) is disordered. The span at 20 to 32 (QMKRRRAAAHRAA) shows a compositional bias: basic residues. A compositionally biased stretch (low complexity) spans 33–48 (RGPAPARAPRASPTQR).

This sequence belongs to the UPF0102 family.

This Bordetella petrii (strain ATCC BAA-461 / DSM 12804 / CCUG 43448) protein is UPF0102 protein Bpet0439.